The following is a 311-amino-acid chain: Oxidoreductase NAD-binding domain-containing protein 1 (311 aa).

The first 17 residues, 1–17, serve as a signal peptide directing secretion; it reads MACAAVMIPGLLRCSVG. Residues 50–186 enclose the FAD-binding FR-type domain; the sequence is HMERTASVLR…GGVGINPLLS (137 aa). 178–183 contacts NAD(+); that stretch reads GVGINP.

The chain is Oxidoreductase NAD-binding domain-containing protein 1 (OXNAD1) from Pongo abelii (Sumatran orangutan).